A 246-amino-acid chain; its full sequence is 23S rRNA (guanosine-2'-O-)-methyltransferase RlmB (246 aa).

S-adenosyl-L-methionine contacts are provided by Gly197, Ile217, and Leu226.

The protein belongs to the class IV-like SAM-binding methyltransferase superfamily. RNA methyltransferase TrmH family. RlmB subfamily.

It localises to the cytoplasm. It carries out the reaction guanosine(2251) in 23S rRNA + S-adenosyl-L-methionine = 2'-O-methylguanosine(2251) in 23S rRNA + S-adenosyl-L-homocysteine + H(+). Its function is as follows. Specifically methylates the ribose of guanosine 2251 in 23S rRNA. In Haemophilus influenzae (strain ATCC 51907 / DSM 11121 / KW20 / Rd), this protein is 23S rRNA (guanosine-2'-O-)-methyltransferase RlmB.